The chain runs to 240 residues: Probable phosphatase Athe_0620 (240 aa).

Zn(2+)-binding residues include His8, His10, His16, His41, Glu74, His102, His132, Asp192, and His194.

Belongs to the PHP family. The cofactor is Zn(2+).

The polypeptide is Probable phosphatase Athe_0620 (Caldicellulosiruptor bescii (strain ATCC BAA-1888 / DSM 6725 / KCTC 15123 / Z-1320) (Anaerocellum thermophilum)).